Consider the following 355-residue polypeptide: 12-oxophytodienoate reductase-like protein (355 aa).

FMN is bound by residues Ala-30–Thr-32, Ala-63, and Gln-105. Asn-175–Ser-178 contacts substrate. Catalysis depends on Tyr-181, which acts as the Proton donor. Arg-265 lines the substrate pocket. Residues Gly-288 and Gly-309 to Arg-310 contribute to the FMN site.

This sequence belongs to the NADH:flavin oxidoreductase/NADH oxidase family. It depends on FMN as a cofactor. In terms of tissue distribution, weakly expressed in flowers and roots.

The protein localises to the cytoplasm. Its function is as follows. May be involved in the biosynthesis or metabolism of oxylipin signaling molecules. This is 12-oxophytodienoate reductase-like protein (OPR2) from Solanum lycopersicum (Tomato).